Here is a 128-residue protein sequence, read N- to C-terminus: NADH-quinone oxidoreductase subunit A (128 aa).

The next 3 helical transmembrane spans lie at 9 to 29 (FPIAVALLVAVGLAAVMLALA), 68 to 88 (LLFIVFDIEAIFLYPWAVLLL), and 96 to 116 (LGWAGYISMGIFVATLVAGLV).

This sequence belongs to the complex I subunit 3 family. NDH-1 is composed of 14 different subunits. Subunits NuoA, H, J, K, L, M, N constitute the membrane sector of the complex.

It is found in the cell inner membrane. The enzyme catalyses a quinone + NADH + 5 H(+)(in) = a quinol + NAD(+) + 4 H(+)(out). NDH-1 shuttles electrons from NADH, via FMN and iron-sulfur (Fe-S) centers, to quinones in the respiratory chain. The immediate electron acceptor for the enzyme in this species is believed to be ubiquinone. Couples the redox reaction to proton translocation (for every two electrons transferred, four hydrogen ions are translocated across the cytoplasmic membrane), and thus conserves the redox energy in a proton gradient. In Anaeromyxobacter sp. (strain Fw109-5), this protein is NADH-quinone oxidoreductase subunit A.